The primary structure comprises 354 residues: mRNA cap guanine-N(7) methyltransferase 2 (354 aa).

One can recognise an mRNA cap 0 methyltransferase domain in the interval 8-286 (KPEQSHHRLF…LYATFIFQKP (279 aa)). S-adenosyl-L-methionine is bound by residues K21, D61, and 88–89 (DP).

Belongs to the class I-like SAM-binding methyltransferase superfamily. mRNA cap 0 methyltransferase family.

The protein resides in the nucleus. The enzyme catalyses a 5'-end (5'-triphosphoguanosine)-ribonucleoside in mRNA + S-adenosyl-L-methionine = a 5'-end (N(7)-methyl 5'-triphosphoguanosine)-ribonucleoside in mRNA + S-adenosyl-L-homocysteine. MRNA capping methyltransferase that methylates the N7 position of the added guanosine to the 5'-cap structure of mRNAs. Binds RNA containing 5'-terminal GpppC. This is mRNA cap guanine-N(7) methyltransferase 2 from Arabidopsis thaliana (Mouse-ear cress).